Consider the following 85-residue polypeptide: RNA-binding protein Hfq (85 aa).

The 60-residue stretch at 9–68 (DPFLNALRRERIPVSIYLVNGIKLQGQVESFDQFVILLKNTVSQMVYKHAISTVVPARPV) folds into the Sm domain.

It belongs to the Hfq family. Homohexamer.

In terms of biological role, RNA chaperone that binds small regulatory RNA (sRNAs) and mRNAs to facilitate mRNA translational regulation in response to envelope stress, environmental stress and changes in metabolite concentrations. Also binds with high specificity to tRNAs. The sequence is that of RNA-binding protein Hfq from Tolumonas auensis (strain DSM 9187 / NBRC 110442 / TA 4).